The primary structure comprises 713 residues: MSLSPSDRELVTEELGREPTPAEEALFENLWSEHCAYRSSQPLLSAFESEGDRVVVGPGDDAAVVALPDPETGENSDTYITMGIESHNHPSYVDPFDGAATGVGGIVRDTMSMGAYPIALADSLYFGDFDREHSKYLFEGVVEGISHYGNCIGVPTVTGSVAFHDDYEGNPLVNVACVGLTDDERLVTAEAQTPGNKLVLFGNATGRDGLGGASFASEDLDEDAETEDRPAVQVGDPYAEKRLIEANEELVDDSLVRAARDLGAAGLGGASSELVAKGGLGAHIELDRVHQREPNMNALEILLAESQERMCYEVRPEDVDAVAAVADKYDLGCSVIGDVTDGNYVCTFDGETVVDCDAEYLADGAPMNDLDHVEPTQPDRDRPSPDLETAFEAVVAAPNTASKEWVYRQYDHEVGTRTALKPGDDAALMAVREAGVGLAFSSGADPNWTDTAPYDGARAVALENATNIAAKGALPLAAVDCLNGGNPEKPDVYGGFRGIVNGLADMCSTLDVPVVGGNVSLYNDSPSGPIPPTPTLAMTGTKPGYDAPPAALSGDGDLLVVGDGGDLELGGSELLAQFGGSDQFPALPDSPAAFIEAVADIADLDSTHATHDVSHGGLAVALAELVGDAGADVDLAGSPDALSVLFSEAVGRVVVETTDPEAVKERLDGVAPVEHIGHATDSGRLELSVGDETLSYSAADIASLRSVIGETLE.

Residues M1–R17 show a composition bias toward basic and acidic residues. Positions M1–T20 are disordered. H34 is an active-site residue. Y37 contacts ATP. E85 contributes to the Mg(2+) binding site. Substrate is bound by residues S86–H89 and R108. Residue H87 is the Proton acceptor of the active site. D109 contacts Mg(2+). Q233 serves as a coordination point for substrate. Residue D261 participates in Mg(2+) binding. E305–Q307 is a binding site for substrate. ATP contacts are provided by D480 and G517. Residue N518 participates in Mg(2+) binding. A substrate-binding site is contributed by S520.

Belongs to the FGAMS family. In terms of assembly, monomer. Part of the FGAM synthase complex composed of 1 PurL, 1 PurQ and 2 PurS subunits.

The protein resides in the cytoplasm. It catalyses the reaction N(2)-formyl-N(1)-(5-phospho-beta-D-ribosyl)glycinamide + L-glutamine + ATP + H2O = 2-formamido-N(1)-(5-O-phospho-beta-D-ribosyl)acetamidine + L-glutamate + ADP + phosphate + H(+). Its pathway is purine metabolism; IMP biosynthesis via de novo pathway; 5-amino-1-(5-phospho-D-ribosyl)imidazole from N(2)-formyl-N(1)-(5-phospho-D-ribosyl)glycinamide: step 1/2. Part of the phosphoribosylformylglycinamidine synthase complex involved in the purines biosynthetic pathway. Catalyzes the ATP-dependent conversion of formylglycinamide ribonucleotide (FGAR) and glutamine to yield formylglycinamidine ribonucleotide (FGAM) and glutamate. The FGAM synthase complex is composed of three subunits. PurQ produces an ammonia molecule by converting glutamine to glutamate. PurL transfers the ammonia molecule to FGAR to form FGAM in an ATP-dependent manner. PurS interacts with PurQ and PurL and is thought to assist in the transfer of the ammonia molecule from PurQ to PurL. This is Phosphoribosylformylglycinamidine synthase subunit PurL from Natronomonas pharaonis (strain ATCC 35678 / DSM 2160 / CIP 103997 / JCM 8858 / NBRC 14720 / NCIMB 2260 / Gabara) (Halobacterium pharaonis).